The primary structure comprises 369 residues: Core histone macro-H2A.1 (369 aa).

The Histone H2A domain occupies 2 to 117; sequence SSRGGKKKST…NIHPELLAKK (116 aa). N6-lactoyllysine; alternate occurs at positions 7 and 9. The residue at position 18 (Lys-18) is an N6-methyllysine. Lys-116 is subject to N6-acetyllysine; alternate. A Glycyl lysine isopeptide (Lys-Gly) (interchain with G-Cter in ubiquitin); alternate cross-link involves residue Lys-116. Lys-117 is covalently cross-linked (Glycyl lysine isopeptide (Lys-Gly) (interchain with G-Cter in ubiquitin)). At Lys-123 the chain carries N6-acetyllysine; alternate. Lys-123 carries the N6,N6-dimethyllysine; alternate modification. A Glycyl lysine isopeptide (Lys-Gly) (interchain with G-Cter in SUMO2); alternate cross-link involves residue Lys-123. The interval 128-180 is disordered; that stretch reads ITPPPAKKAKSPSQKKPVAKKTGGKKGARKSKKKQGEVSKAASADSTTEGTPT. Thr-129 carries the post-translational modification Phosphothreonine. Residues 144–160 are compositionally biased toward basic residues; that stretch reads PVAKKTGGKKGARKSKK. A Glycyl lysine isopeptide (Lys-Gly) (interchain with G-Cter in SUMO2) cross-link involves residue Lys-167. Phosphoserine occurs at positions 170 and 173. Phosphothreonine is present on Thr-178. The Macro domain occupies 184–367; sequence TVLSTKSLFL…IYVQEMAKLD (184 aa). Lys-189 participates in a covalent cross-link: Glycyl lysine isopeptide (Lys-Gly) (interchain with G-Cter in SUMO2). Residues Asp-203, Ile-204, Val-226, Ser-275, Gly-312, Ser-313, Gly-314, and Asn-316 each coordinate a glycoprotein. Residue Lys-320 forms a Glycyl lysine isopeptide (Lys-Gly) (interchain with G-Cter in SUMO2) linkage.

The protein belongs to the histone H2A family. As to quaternary structure, the nucleosome is a histone octamer containing two molecules each of H2A, H2B, H3 and H4 assembled in one H3-H4 heterotetramer and two H2A-H2B heterodimers. Interacts with HDAC1 and HDAC2. Interacts with SPOP. Part of a complex consisting of MACROH2A1, CUL3 and SPOP. Interacts with PARP1. In terms of processing, monoubiquitinated at either Lys-116 or Lys-117. May also be polyubiquitinated. Ubiquitination is mediated by the CUL3/SPOP E3 complex and does not promote proteasomal degradation. Instead, it is required for enrichment in inactive X chromosome chromatin. Widely expressed, with high levels in testis. Present in liver, kidney and adrenal gland (at protein level). In the liver, present in hepatocytes and at a lesser extent in cells of the bile ducts. In the kidney, expressed in proximal and distal convoluted tubules and in straight proximal tubules. In the adrenal gland, present in inner cells of the cortex and medulla.

The protein resides in the nucleus. The protein localises to the chromosome. Functionally, variant histone H2A which replaces conventional H2A in a subset of nucleosomes where it represses transcription. Nucleosomes wrap and compact DNA into chromatin, limiting DNA accessibility to the cellular machineries which require DNA as a template. Histones thereby play a central role in transcription regulation, DNA repair, DNA replication and chromosomal stability. DNA accessibility is regulated via a complex set of post-translational modifications of histones, also called histone code, and nucleosome remodeling. Involved in stable X chromosome inactivation. Inhibits the binding of transcription factors, including NF-kappa-B, and interferes with the activity of remodeling SWI/SNF complexes. Inhibits histone acetylation by EP300 and recruits class I HDACs, which induces a hypoacetylated state of chromatin. Its function is as follows. Isoform that specifically binds poly-ADP-ribose and O-acetyl-ADP-ribose and plays a key role in NAD(+) metabolism. Able to bind to the ends of poly-ADP-ribose chains created by PARP1 and cap them. This prevents PARP1 from further addition of ADP-ribose and thus limits the consumption of nuclear NAD(+), allowing the cell to maintain proper NAD(+) levels in both the nucleus and the mitochondria to promote proper mitochondrial respiration. Increases the expression of genes involved in redox metabolism, including SOD3. In terms of biological role, in contrast to isoform 1, does not bind poly-ADP-ribose. Represses SOD3 gene expression. The sequence is that of Core histone macro-H2A.1 from Mus musculus (Mouse).